The primary structure comprises 603 residues: Elongation factor 4 (603 aa).

In terms of domain architecture, tr-type G spans Asp-7–Lys-191. Residues Asp-19–Thr-24 and Asn-138–Asp-141 each bind GTP.

This sequence belongs to the TRAFAC class translation factor GTPase superfamily. Classic translation factor GTPase family. LepA subfamily.

It is found in the cell inner membrane. It catalyses the reaction GTP + H2O = GDP + phosphate + H(+). Required for accurate and efficient protein synthesis under certain stress conditions. May act as a fidelity factor of the translation reaction, by catalyzing a one-codon backward translocation of tRNAs on improperly translocated ribosomes. Back-translocation proceeds from a post-translocation (POST) complex to a pre-translocation (PRE) complex, thus giving elongation factor G a second chance to translocate the tRNAs correctly. Binds to ribosomes in a GTP-dependent manner. The sequence is that of Elongation factor 4 from Rhodopseudomonas palustris (strain ATCC BAA-98 / CGA009).